The primary structure comprises 407 residues: Probable tRNA sulfurtransferase (407 aa).

Positions 61–165 (NEITYRLSKI…LDAIYMYEEV (105 aa)) constitute a THUMP domain. Residues 183–184 (ML), 208–209 (HF), Arg265, Gly287, and Gln296 each bind ATP.

This sequence belongs to the ThiI family.

It localises to the cytoplasm. The enzyme catalyses [ThiI sulfur-carrier protein]-S-sulfanyl-L-cysteine + a uridine in tRNA + 2 reduced [2Fe-2S]-[ferredoxin] + ATP + H(+) = [ThiI sulfur-carrier protein]-L-cysteine + a 4-thiouridine in tRNA + 2 oxidized [2Fe-2S]-[ferredoxin] + AMP + diphosphate. The catalysed reaction is [ThiS sulfur-carrier protein]-C-terminal Gly-Gly-AMP + S-sulfanyl-L-cysteinyl-[cysteine desulfurase] + AH2 = [ThiS sulfur-carrier protein]-C-terminal-Gly-aminoethanethioate + L-cysteinyl-[cysteine desulfurase] + A + AMP + 2 H(+). Its pathway is cofactor biosynthesis; thiamine diphosphate biosynthesis. Catalyzes the ATP-dependent transfer of a sulfur to tRNA to produce 4-thiouridine in position 8 of tRNAs, which functions as a near-UV photosensor. Also catalyzes the transfer of sulfur to the sulfur carrier protein ThiS, forming ThiS-thiocarboxylate. This is a step in the synthesis of thiazole, in the thiamine biosynthesis pathway. The sulfur is donated as persulfide by IscS. This is Probable tRNA sulfurtransferase from Staphylococcus aureus (strain N315).